The sequence spans 157 residues: Myosin essential light chain, striated adductor muscle (157 aa).

EF-hand domains are found at residues 7–44 and 82–117; these read DEID…LGIN and GTFA…LGER.

In molluscan muscle, calcium regulation is associated with myosin rather than with actin. Muscle myosin contains two types of light chains: the catalytic light chain, essential for ATPase activity, and the regulatory light chain, a calcium-binding protein responsible for Ca(2+) dependent binding and Ca(2+) dependent Mg-ATPase activity. The protein is Myosin essential light chain, striated adductor muscle of Argopecten irradians (Bay scallop).